The following is a 186-amino-acid chain: Ribosome maturation factor RimP (186 aa).

It belongs to the RimP family.

The protein resides in the cytoplasm. Required for maturation of 30S ribosomal subunits. The polypeptide is Ribosome maturation factor RimP (Novosphingobium aromaticivorans (strain ATCC 700278 / DSM 12444 / CCUG 56034 / CIP 105152 / NBRC 16084 / F199)).